Here is a 434-residue protein sequence, read N- to C-terminus: MSILKIHAREIFDSRGNPTVEVDLYTSKGLFRAAVPSGASTGIYEALELRDNDKTRFMGKGVSKAVAHVNKTIAPALISKNISVVEQEKIDRLMLEMDGSENKSKFGANAILGVSLAVCKAGAAEKGVPLYRHIADLAGNPEVILPVPAFNVINGGSHAGNKLAMQEFMILPVGAESFKEAMRIGAEVYHNLKNVIKEKYGKDATNVGDEGGFAPNILENKEALELLKNAINKAGYSDKIVIGMDVAASEFYRDGKYDLDFKSPDDPSRYITPDQLADLYKSFVKNYPVVSIEDPFDQDDWAAWKKFTASVGIQVVGDDLTVTNPKRIAKAVDDKACNCLLLKVNQIGSVTESLQACKLAQSNGWGVMVSHRSGETEDTFIADLVVGLCTGQIKTGAPCRSERLAKYNQILRIEEELGSKARFAGRNFRNPRIN.

Ser40 lines the Mg(2+) pocket. The substrate site is built by His158 and Glu167. Residue Glu210 is the Proton donor of the active site. Residues Asp245, Glu293, and Asp318 each contribute to the Mg(2+) site. Substrate contacts are provided by Glu293 and Asp318. The active-site Proton acceptor is the Lys343. Substrate is bound by residues 370-373 (SHRS) and Lys394.

The protein belongs to the enolase family. In terms of assembly, homodimer. Mg(2+) is required as a cofactor.

It is found in the cytoplasm. The enzyme catalyses (2R)-2-phosphoglycerate = phosphoenolpyruvate + H2O. Its pathway is carbohydrate degradation; glycolysis; pyruvate from D-glyceraldehyde 3-phosphate: step 4/5. The polypeptide is Alpha-enolase (Alligator mississippiensis (American alligator)).